Here is a 170-residue protein sequence, read N- to C-terminus: Cathelicidin antimicrobial peptide (170 aa).

The signal sequence occupies residues 1–30 (MKTQRHGPSLGRWSLVLLLLGLVMPLAIVA). The propeptide at 31-131 (QVLSYQEAVL…DISCDKDNRR (101 aa)) is cathelin-like domain (CLD). 2 disulfides stabilise this stretch: Cys86/Cys97 and Cys108/Cys125. An active core region spans residues 150 to 162 (LKKIGQKIKDFWG).

The protein belongs to the cathelicidin family. Monomer, homodimer or homotrimer (in vitro). Oligomerizes as tetra- or hexamer in solution (in vitro). In terms of processing, proteolytically cleaved by proteinase PRTN3 into antibacterial peptide LL-37. Proteolytically cleaved by cathepsin CTSG and neutrophil elastase ELANE. Post-translationally, resistant to proteolytic degradation in solution, and when bound to both zwitterionic (mimicking mammalian membranes) and negatively charged membranes (mimicking bacterial membranes). After secretion onto the skin surface, the CAMP gene product is processed by a serine protease-dependent mechanism into multiple novel antimicrobial peptides distinct from and shorter than cathelicidin LL-37. These peptides show enhanced antimicrobial action, acquiring the ability to kill skin pathogens such as S.aureus, E.coli and C.albicans. These peptides have lost the ability to stimulate CXCL8/IL8 release from keratinocytes. The peptides act synergistically, killing bacteria at lower concentrations when present together, and maintain activity at increased salt condition.

It is found in the secreted. The protein localises to the vesicle. Its function is as follows. Antimicrobial protein that is an integral component of the innate immune system. Binds to bacterial lipopolysaccharides (LPS). Acts via neutrophil N-formyl peptide receptors to enhance the release of CXCL2. Postsecretory processing generates multiple cathelicidin antimicrobial peptides with various lengths which act as a topical antimicrobial defense in sweat on skin. The unprocessed precursor form, cathelicidin antimicrobial peptide, inhibits the growth of Gram-negative E.coli and E.aerogenes with efficiencies comparable to that of the mature peptide LL-37 (in vitro). Functionally, antimicrobial peptide that is an integral component of the innate immune system. Binds to bacterial lipopolysaccharides (LPS). Causes membrane permeabilization by forming transmembrane pores (in vitro). Causes lysis of E.coli. Exhibits antimicrobial activity against Gram-negative bacteria such as P.aeruginosa, S.typhimurium, E.aerogenes, E.coli and P.syringae, Gram-positive bacteria such as L.monocytogenes, S.epidermidis, S.pyogenes and S.aureus, as well as vancomycin-resistant enterococci (in vitro). Exhibits antimicrobial activity against methicillin-resistant S.aureus, P.mirabilis, and C.albicans in low-salt media, but not in media containing 100 mM NaCl (in vitro). Forms chiral supramolecular assemblies with quinolone signal (PQS) molecules of P.aeruginosa, which may lead to interference of bacterial quorum signaling and perturbance of bacterial biofilm formation. May form supramolecular fiber-like assemblies on bacterial membranes. Induces cytokine and chemokine producation as well as TNF/TNFA and CSF2/GMCSF production in normal human keratinocytes. Exhibits hemolytic activity against red blood cells. In terms of biological role, exhibits antimicrobial activity against E.coli and B.megaterium (in vitro). The chain is Cathelicidin antimicrobial peptide from Trachypithecus cristatus (Silvered leaf-monkey).